The following is a 607-amino-acid chain: Dolichyl-diphosphooligosaccharide--protein glycosyltransferase subunit 1 (607 aa).

An N-terminal signal peptide occupies residues 1-23 (MEAPVARLFLLLLLGSWTPAPGS). Residues 24 to 434 (ASSEAPPLIN…VVHYTFNKVL (411 aa)) lie on the Lumenal side of the membrane. Lys-187 is subject to N6-acetyllysine. An N-linked (GlcNAc...) asparagine glycan is attached at Asn-299. Residues 435-455 (MLQEPLLVVAAFYILFFTVII) form a helical membrane-spanning segment. The Cytoplasmic segment spans residues 456 to 607 (YVRLDFSITK…TKIDHILDAL (152 aa)). An N6-acetyllysine; alternate modification is found at Lys-538. A Glycyl lysine isopeptide (Lys-Gly) (interchain with G-Cter in SUMO2); alternate cross-link involves residue Lys-538.

It belongs to the OST1 family. Component of the oligosaccharyltransferase (OST) complex. OST exists in two different complex forms which contain common core subunits RPN1, RPN2, OST48, OST4, DAD1 and TMEM258, either STT3A or STT3B as catalytic subunits, and form-specific accessory subunits. STT3A complex assembly occurs through the formation of 3 subcomplexes. Subcomplex 1 contains RPN1 and TMEM258, subcomplex 2 contains the STT3A-specific subunits STT3A, DC2/OSTC, and KCP2 as well as the core subunit OST4, and subcomplex 3 contains RPN2, DAD1, and OST48. The STT3A complex can form stable complexes with the Sec61 complex or with both the Sec61 and TRAP complexes. Interacts with TMEM35A/NACHO. In terms of processing, ubiquitinated by the ECS(ASB11) complex. Post-translationally, ufmylated by UFL1 in response to endoplasmic reticulum stress, promoting reticulophagy of endoplasmic reticulum sheets.

Its subcellular location is the endoplasmic reticulum membrane. The protein operates within protein modification; protein glycosylation. Subunit of the oligosaccharyl transferase (OST) complex that catalyzes the initial transfer of a defined glycan (Glc(3)Man(9)GlcNAc(2) in eukaryotes) from the lipid carrier dolichol-pyrophosphate to an asparagine residue within an Asn-X-Ser/Thr consensus motif in nascent polypeptide chains, the first step in protein N-glycosylation. N-glycosylation occurs cotranslationally and the complex associates with the Sec61 complex at the channel-forming translocon complex that mediates protein translocation across the endoplasmic reticulum (ER). All subunits are required for a maximal enzyme activity. In Macaca fascicularis (Crab-eating macaque), this protein is Dolichyl-diphosphooligosaccharide--protein glycosyltransferase subunit 1.